We begin with the raw amino-acid sequence, 358 residues long: Chorismate synthase (358 aa).

The tract at residues 39 to 61 (ADIQPFLDKRRPGQSRHTTQRQE) is disordered. NADP(+) is bound by residues R48 and R54. FMN contacts are provided by residues 125-127 (RSS), 237-238 (NA), G284, 299-303 (KPTSS), and R325.

Belongs to the chorismate synthase family. Homotetramer. FMNH2 is required as a cofactor.

It catalyses the reaction 5-O-(1-carboxyvinyl)-3-phosphoshikimate = chorismate + phosphate. It participates in metabolic intermediate biosynthesis; chorismate biosynthesis; chorismate from D-erythrose 4-phosphate and phosphoenolpyruvate: step 7/7. Catalyzes the anti-1,4-elimination of the C-3 phosphate and the C-6 proR hydrogen from 5-enolpyruvylshikimate-3-phosphate (EPSP) to yield chorismate, which is the branch point compound that serves as the starting substrate for the three terminal pathways of aromatic amino acid biosynthesis. This reaction introduces a second double bond into the aromatic ring system. This chain is Chorismate synthase, found in Sphingopyxis alaskensis (strain DSM 13593 / LMG 18877 / RB2256) (Sphingomonas alaskensis).